The primary structure comprises 178 residues: Photosystem I assembly protein Ycf4 (178 aa).

The next 2 helical transmembrane spans lie at 19–39 (ILVA…SLSS) and 61–81 (LVMG…WAVI).

This sequence belongs to the Ycf4 family.

The protein localises to the cellular thylakoid membrane. Its function is as follows. Seems to be required for the assembly of the photosystem I complex. The chain is Photosystem I assembly protein Ycf4 from Synechococcus sp. (strain WH7803).